An 88-amino-acid polypeptide reads, in one-letter code: Small ribosomal subunit protein bS20 (88 aa).

Disordered regions lie at residues 1 to 25 (MPNIKSQIKRVKTNEKSRQRNKAVK) and 68 to 88 (HKNQAANRKSAISKKLNSLAA).

It belongs to the bacterial ribosomal protein bS20 family.

Functionally, binds directly to 16S ribosomal RNA. The protein is Small ribosomal subunit protein bS20 of Cutibacterium acnes (strain DSM 16379 / KPA171202) (Propionibacterium acnes).